A 354-amino-acid chain; its full sequence is Peptide chain release factor 1 (354 aa).

Glutamine 230 carries the N5-methylglutamine modification.

Belongs to the prokaryotic/mitochondrial release factor family. Post-translationally, methylated by PrmC. Methylation increases the termination efficiency of RF1.

The protein localises to the cytoplasm. Peptide chain release factor 1 directs the termination of translation in response to the peptide chain termination codons UAG and UAA. The protein is Peptide chain release factor 1 of Novosphingobium aromaticivorans (strain ATCC 700278 / DSM 12444 / CCUG 56034 / CIP 105152 / NBRC 16084 / F199).